A 265-amino-acid chain; its full sequence is Upstream stimulatory factor (265 aa).

The segment covering 1 to 18 (MDVQDHTLDQGPQDKDKD) has biased composition (basic and acidic residues). 2 disordered regions span residues 1–21 (MDVQDHTLDQGPQDKDKDLEE) and 119–149 (ASAAIPGDGAGPASGGEQQPGITQPSGAAGG). The segment covering 134-144 (GEQQPGITQPS) has biased composition (polar residues). A bHLH domain is found at 190-245 (RRRATHNEVERRRRDKINNWIVKLSKIIPDCNIDHSKQGQSKGGILTKTCDYIHDL).

In terms of assembly, efficient DNA binding requires dimerization with another bHLH protein. Binds DNA as a homodimer or a heterodimer. Enriched in ectodermal tissue.

Its subcellular location is the nucleus. In terms of biological role, may act as a transcription factor which recognizes the CACGTG motif on SPEC gene promoters. The protein is Upstream stimulatory factor of Strongylocentrotus purpuratus (Purple sea urchin).